A 443-amino-acid polypeptide reads, in one-letter code: MQHELAQTIPELILWTKEREFSLSLSSDRLAFLLAIALYNNERTDGELLESDLQDIFRHVSNAFEQSEATQTQRANNAINDLVKQRFLNRFSSEFTEGLAIYRLTPLGVGVSEYYIRQREFSTLRLSIQLSIVADEIQRASNAAEEGGDERFWRNQVFAPLKFSVAEIFDSIDLSQRMMDENQQQIRERIAMLLSQNWHEAIATCQQLLDETSGNLRELQDVLNASGDKLQSQLLRIQSCLIGRDDLDFVDQLIVNLQNKLDRIISWGQQAIDLWIGYDRHVHKFIRTAIDMDKNRVFGQRLRQSIQDYFESPWQLYIAKAEPLLDLRDDETELNEAEAVGELPTELEYESLTQVQEQIIATMQAHLAPFREQGKPIDLGAILREQLAMYPLSRHFDVARIIVDQAVKLGMASQDSQAIYPEWQSINDNGAEVQANVIDQYNK.

The tract at residues 209–237 (LDETSGNLRELQDVLNASGDKLQSQLLRI) is leucine-zipper.

The protein belongs to the MukF family. In terms of assembly, interacts, and probably forms a ternary complex, with MukE and MukB via its C-terminal region. The complex formation is stimulated by calcium or magnesium. It is required for an interaction between MukE and MukB.

Its subcellular location is the cytoplasm. It localises to the nucleoid. Functionally, involved in chromosome condensation, segregation and cell cycle progression. May participate in facilitating chromosome segregation by condensation DNA from both sides of a centrally located replisome during cell division. Not required for mini-F plasmid partitioning. Probably acts via its interaction with MukB and MukE. Overexpression results in anucleate cells. It has a calcium binding activity. The polypeptide is Chromosome partition protein MukF (Glaesserella parasuis serovar 5 (strain SH0165) (Haemophilus parasuis)).